A 290-amino-acid polypeptide reads, in one-letter code: 33 kDa chaperonin (290 aa).

2 disulfide bridges follow: Cys-235–Cys-237 and Cys-268–Cys-271.

Belongs to the HSP33 family. In terms of processing, under oxidizing conditions two disulfide bonds are formed involving the reactive cysteines. Under reducing conditions zinc is bound to the reactive cysteines and the protein is inactive.

The protein resides in the cytoplasm. Functionally, redox regulated molecular chaperone. Protects both thermally unfolding and oxidatively damaged proteins from irreversible aggregation. Plays an important role in the bacterial defense system toward oxidative stress. The protein is 33 kDa chaperonin of Streptococcus pyogenes serotype M12 (strain MGAS2096).